Consider the following 618-residue polypeptide: Isocitrate dehydrogenase kinase/phosphatase (618 aa).

ATP contacts are provided by residues 332-338 (APGIKGM) and lysine 353. Aspartate 388 is a catalytic residue.

It belongs to the AceK family.

The protein resides in the cytoplasm. The catalysed reaction is L-seryl-[isocitrate dehydrogenase] + ATP = O-phospho-L-seryl-[isocitrate dehydrogenase] + ADP + H(+). In terms of biological role, bifunctional enzyme which can phosphorylate or dephosphorylate isocitrate dehydrogenase (IDH) on a specific serine residue. This is a regulatory mechanism which enables bacteria to bypass the Krebs cycle via the glyoxylate shunt in response to the source of carbon. When bacteria are grown on glucose, IDH is fully active and unphosphorylated, but when grown on acetate or ethanol, the activity of IDH declines drastically concomitant with its phosphorylation. The polypeptide is Isocitrate dehydrogenase kinase/phosphatase (Methylibium petroleiphilum (strain ATCC BAA-1232 / LMG 22953 / PM1)).